Reading from the N-terminus, the 130-residue chain is Cholecystokinin (130 aa).

An N-terminal signal peptide occupies residues 1 to 20; sequence MYSGICICVFLAVLSASSFG. A propeptide spanning residues 21 to 48 is cleaved from the precursor; it reads QQTAGSHNGNPLAAELEQSLTEHHRHVR. Residues 40–59 are disordered; it reads LTEHHRHVRAPSSAGPLKPV. Tyrosine 112 bears the Sulfotyrosine mark. Phenylalanine 118 bears the Phenylalanine amide mark. Residues 122 to 130 constitute a propeptide that is removed on maturation; the sequence is SAEEYEYSS. Sulfotyrosine is present on residues tyrosine 126 and tyrosine 128.

It belongs to the gastrin/cholecystokinin family. The precursor is cleaved by proteases to produce a number of active cholecystokinins. In terms of tissue distribution, highly concentrated in the duodenum. Also localized in more distal parts of the small intestine.

Its subcellular location is the secreted. In terms of biological role, this peptide hormone induces gall bladder contraction and the release of pancreatic enzymes in the gut. Its function in the brain is not clear. The sequence is that of Cholecystokinin (CCK) from Struthio camelus (Common ostrich).